A 293-amino-acid polypeptide reads, in one-letter code: Proline iminopeptidase (293 aa).

The region spanning 28–277 (KPLVLLHGGP…FSRHMPFVEE (250 aa)) is the AB hydrolase-1 domain. The active-site Nucleophile is the Ser-104. Asp-244 is an active-site residue. The active-site Proton donor is His-271.

It belongs to the peptidase S33 family.

It carries out the reaction Release of N-terminal proline from a peptide.. Functionally, releases the N-terminal proline from various substrates. This is Proline iminopeptidase from Clostridium botulinum (strain Hall / ATCC 3502 / NCTC 13319 / Type A).